Reading from the N-terminus, the 288-residue chain is MRIRVPATTANLGPGFDSCGLALTLYLTLDIGEKADSWYIEHNIGGGIPHDETNVIIETALNLAPNLTPHHLVMTCDIPPARGLGSSSAAVVAGIELANTLAELNLSKEEKVRIAAEIEGHPDNVAPAVLGNWVVGAKLDGEDFYVRHLFPDCALIAFIPKAELLTSESRGVLPETLPFKEAVKASSIANVMIAAILRNDMTLAGEMMERDLWHEKYRSKLVPHLTQIREVAKNNGAYAACLSGAGPTVLVFAPRDVADTLQTSLQTLEIDADVLLLDVEGSGAEVFR.

79-89 (PPARGLGSSSA) lines the ATP pocket.

Belongs to the GHMP kinase family. Homoserine kinase subfamily.

Its subcellular location is the cytoplasm. The enzyme catalyses L-homoserine + ATP = O-phospho-L-homoserine + ADP + H(+). It participates in amino-acid biosynthesis; L-threonine biosynthesis; L-threonine from L-aspartate: step 4/5. Catalyzes the ATP-dependent phosphorylation of L-homoserine to L-homoserine phosphate. The chain is Homoserine kinase from Listeria innocua serovar 6a (strain ATCC BAA-680 / CLIP 11262).